We begin with the raw amino-acid sequence, 551 residues long: HTH-type transcriptional regulator SgrR (551 aa).

In terms of domain architecture, HTH marR-type spans 1–116 (MPSARLQQQF…LVSHLGRSFR (116 aa)). Positions 26–49 (LNELAALLSCSRRHMRTLLNTMQD) form a DNA-binding region, H-T-H motif. The segment at 163 to 492 (ELEADIAHHW…IDWQADAARW (330 aa)) is solute-binding.

Its function is as follows. Activates the small RNA gene sgrS under glucose-phosphate stress conditions as well as yfdZ. Represses its own transcription under both stress and non-stress conditions. Might act as a sensor of the intracellular accumulation of phosphoglucose by binding these molecules in its C-terminal solute-binding domain. This chain is HTH-type transcriptional regulator SgrR, found in Shigella flexneri serotype 5b (strain 8401).